We begin with the raw amino-acid sequence, 638 residues long: Homeobox protein 10 (638 aa).

3 disordered regions span residues 23–55 (ETQP…LNTN), 76–139 (TDEN…VNTN), and 195–219 (IANE…EEAK). 2 stretches are compositionally biased toward low complexity: residues 24–55 (TQPT…LNTN) and 80–139 (NTSV…VNTN). Over residues 205 to 214 (EPQTNSNVNG) the composition is skewed to polar residues. Residues 301 to 360 (NKKKRQRTSPEQLAILEQIFETDKMPSQQIRVRLANQLGMSSRRVQIWFQNKRAKVKRGG) constitute a DNA-binding region (homeobox). Disordered stretches follow at residues 381–431 (EDED…TSSD) and 448–638 (SSSS…IVKN). Composition is skewed to low complexity over residues 388–411 (SLTI…NNNG), 419–430 (LSSSPTNLNTSS), and 462–501 (NNTN…TTTT). 2 stretches are compositionally biased toward polar residues: residues 502 to 522 (SSSP…NKLT) and 545 to 573 (SLNS…TDKQ). Residues 575–625 (NSDFSNFNNNNNNNNNNNNNNNNNNNINNNGNNNSNNNDSNNNNNKSNFSD) are compositionally biased toward low complexity.

It localises to the nucleus. Functionally, putative transcription factor. The polypeptide is Homeobox protein 10 (hbx10) (Dictyostelium discoideum (Social amoeba)).